Here is a 206-residue protein sequence, read N- to C-terminus: Large ribosomal subunit protein uL4 (206 aa).

This sequence belongs to the universal ribosomal protein uL4 family. Part of the 50S ribosomal subunit.

Its function is as follows. One of the primary rRNA binding proteins, this protein initially binds near the 5'-end of the 23S rRNA. It is important during the early stages of 50S assembly. It makes multiple contacts with different domains of the 23S rRNA in the assembled 50S subunit and ribosome. Functionally, forms part of the polypeptide exit tunnel. The chain is Large ribosomal subunit protein uL4 from Paracoccus denitrificans (strain Pd 1222).